Reading from the N-terminus, the 367-residue chain is F-box only protein 25 (367 aa).

The interaction with beta-actin stretch occupies residues 1 to 83 (MPFLGQDWRS…NDTNTQSFYR (83 aa)). In terms of domain architecture, F-box spans 226-274 (LTLSDLPLHMLNNILYRFSDGWDIITLGQVTPTLYMLSEDRQLWKKLCQ).

Part of a SCF (SKP1-cullin-F-box) protein ligase complex consisting of FBXO25, SKP1, CUL1 and RBX1. Interacts directly with SKP1 and CUL1. Interacts (via C-terminus) with beta-actin (via N-terminus). As to expression, expressed in all brain tissue observed.

Its subcellular location is the nucleus. It participates in protein modification; protein ubiquitination. In terms of biological role, substrate-recognition component of the SCF (SKP1-CUL1-F-box protein)-type E3 ubiquitin ligase complex. May play a role in accumulation of expanded polyglutamine (polyQ) protein huntingtin (HTT). The chain is F-box only protein 25 (FBXO25) from Homo sapiens (Human).